Here is a 356-residue protein sequence, read N- to C-terminus: Phospho-N-acetylmuramoyl-pentapeptide-transferase (356 aa).

A run of 10 helical transmembrane segments spans residues 27-47, 73-93, 97-117, 134-154, 163-183, 195-215, 232-252, 258-278, 285-305, and 333-353; these read AAVA…ILML, TMGG…WMDL, FVWA…LDDY, LLVE…RTGT, GIVI…IVGF, GLAT…VYLS, AGEL…FLWF, AVFM…TIAV, VLVL…IQVF, and TVVI…LATL.

It belongs to the glycosyltransferase 4 family. MraY subfamily. It depends on Mg(2+) as a cofactor.

It is found in the cell inner membrane. The enzyme catalyses UDP-N-acetyl-alpha-D-muramoyl-L-alanyl-gamma-D-glutamyl-meso-2,6-diaminopimeloyl-D-alanyl-D-alanine + di-trans,octa-cis-undecaprenyl phosphate = di-trans,octa-cis-undecaprenyl diphospho-N-acetyl-alpha-D-muramoyl-L-alanyl-D-glutamyl-meso-2,6-diaminopimeloyl-D-alanyl-D-alanine + UMP. It participates in cell wall biogenesis; peptidoglycan biosynthesis. Its function is as follows. Catalyzes the initial step of the lipid cycle reactions in the biosynthesis of the cell wall peptidoglycan: transfers peptidoglycan precursor phospho-MurNAc-pentapeptide from UDP-MurNAc-pentapeptide onto the lipid carrier undecaprenyl phosphate, yielding undecaprenyl-pyrophosphoryl-MurNAc-pentapeptide, known as lipid I. In Sphingopyxis alaskensis (strain DSM 13593 / LMG 18877 / RB2256) (Sphingomonas alaskensis), this protein is Phospho-N-acetylmuramoyl-pentapeptide-transferase.